The sequence spans 186 residues: Protein C (186 aa).

Residues 1–15 (MSKTDWNASGLSRPS) show a composition bias toward polar residues. The tract at residues 1–44 (MSKTDWNASGLSRPSPSAHWPSRKLWQHGQKYQTTQDRSEPPAG) is disordered.

The protein belongs to the morbillivirus protein C family. Interacts with the phosphoprotein (via C-terminus); this interaction allows C to associate with the ribonucleocapsid.

The protein resides in the host nucleus. Its subcellular location is the host cytoplasmic vesicle. In terms of biological role, ribonucleocapsid-associated protein that interacts with the phosphoprotein (P), thereby increasing replication accuracy and processivity of the polymerase complex. The protein is Protein C (P/V/C) of Homo sapiens (Human).